The following is a 301-amino-acid chain: Protease HtpX (301 aa).

2 consecutive transmembrane segments (helical) span residues 4 to 24 and 38 to 58; these read IGLF…ILSL and LGNL…VSLF. Residue His147 participates in Zn(2+) binding. The active site involves Glu148. His151 serves as a coordination point for Zn(2+). The next 2 membrane-spanning stretches (helical) occupy residues 155–175 and 200–220; these read GDMV…MFFA and FIIT…IVMW. Glu226 serves as a coordination point for Zn(2+).

The protein belongs to the peptidase M48B family. Zn(2+) serves as cofactor.

Its subcellular location is the cell inner membrane. This chain is Protease HtpX, found in Acinetobacter baumannii (strain AB307-0294).